The primary structure comprises 190 residues: Xanthine phosphoribosyltransferase (190 aa).

2 residues coordinate xanthine: Leu20 and Asn27. Ala128–Ala132 serves as a coordination point for 5-phospho-alpha-D-ribose 1-diphosphate. A xanthine-binding site is contributed by Lys156.

The protein belongs to the purine/pyrimidine phosphoribosyltransferase family. Xpt subfamily. Homodimer.

The protein resides in the cytoplasm. The enzyme catalyses XMP + diphosphate = xanthine + 5-phospho-alpha-D-ribose 1-diphosphate. Its pathway is purine metabolism; XMP biosynthesis via salvage pathway; XMP from xanthine: step 1/1. Functionally, converts the preformed base xanthine, a product of nucleic acid breakdown, to xanthosine 5'-monophosphate (XMP), so it can be reused for RNA or DNA synthesis. In Stutzerimonas stutzeri (strain A1501) (Pseudomonas stutzeri), this protein is Xanthine phosphoribosyltransferase.